A 443-amino-acid polypeptide reads, in one-letter code: Chromosomal replication initiator protein DnaA (443 aa).

The domain I, interacts with DnaA modulators stretch occupies residues 1 to 67; sequence MDAWSRSLER…RELLAHFAGF (67 aa). The domain II stretch occupies residues 67–105; sequence FSDVFLEIGSRPRPVEAQNAPFSTPSAHVSSEPQVPFAG. The tract at residues 106 to 323 is domain III, AAA+ region; the sequence is NLDNHYTFAN…GALNTLTARA (218 aa). 4 residues coordinate ATP: Gly-151, Gly-153, Lys-154, and Thr-155. The interval 324–443 is domain IV, binds dsDNA; it reads NFTGRAITTE…WDKLIRKLSE (120 aa).

This sequence belongs to the DnaA family. Oligomerizes as a right-handed, spiral filament on DNA at oriC.

It is found in the cytoplasm. Plays an essential role in the initiation and regulation of chromosomal replication. ATP-DnaA binds to the origin of replication (oriC) to initiate formation of the DNA replication initiation complex once per cell cycle. Binds the DnaA box (a 9 base pair repeat at the origin) and separates the double-stranded (ds)DNA. Forms a right-handed helical filament on oriC DNA; dsDNA binds to the exterior of the filament while single-stranded (ss)DNA is stabiized in the filament's interior. The ATP-DnaA-oriC complex binds and stabilizes one strand of the AT-rich DNA unwinding element (DUE), permitting loading of DNA polymerase. After initiation quickly degrades to an ADP-DnaA complex that is not apt for DNA replication. Binds acidic phospholipids. The polypeptide is Chromosomal replication initiator protein DnaA (Stenotrophomonas maltophilia (strain R551-3)).